Reading from the N-terminus, the 379-residue chain is uncharacterized protein (379 aa).

It belongs to the glycosyltransferase 28 family.

This is an uncharacterized protein from Methanosarcina acetivorans (strain ATCC 35395 / DSM 2834 / JCM 12185 / C2A).